Reading from the N-terminus, the 277-residue chain is MQLLALTLALCASIAALPTQQTPLPLEDPIKSPFPIHHSCNATEQRQLATALQETVTLAEHAKDHILRWGNESAIYRKYFGDRPSLTAIGAYDIIVNGNPDNILFRCDNPDGNCALEGWGGHWRGENASDETVICELSYTTRRSLSTMCSQGYTISEWETNTFWAGDLLHRLYHMPAIGQGLVEHYADGYEGVLELAEGNRTEAVHDSETLQYFALEVYAYDVAVPGIGCVGGEEENDGQGEEQTEEPAQDDQQDEAAEEEIPENCHTHEGGELHCT.

The signal sequence occupies residues 1 to 16; sequence MQLLALTLALCASIAA. Residues Asn41, Asn71, Asn127, and Asn200 are each glycosylated (N-linked (GlcNAc...) asparagine). The interval 230 to 277 is disordered; it reads CVGGEEENDGQGEEQTEEPAQDDQQDEAAEEEIPENCHTHEGGELHCT. Over residues 233–263 the composition is skewed to acidic residues; it reads GEEENDGQGEEQTEEPAQDDQQDEAAEEEIP. Residues 264 to 277 show a composition bias toward basic and acidic residues; sequence ENCHTHEGGELHCT.

Belongs to the ZPS1 family.

This Emericella nidulans (strain FGSC A4 / ATCC 38163 / CBS 112.46 / NRRL 194 / M139) (Aspergillus nidulans) protein is Antigen 1 (aspnd1).